The following is a 23-amino-acid chain: Aurein-4.3 (23 aa).

It belongs to the frog skin active peptide (FSAP) family. Aurein subfamily. In terms of tissue distribution, expressed by the skin dorsal glands.

The protein resides in the secreted. Functionally, has no antimicrobial or anticancer activity. This is Aurein-4.3 from Ranoidea aurea (Green and golden bell frog).